Here is a 125-residue protein sequence, read N- to C-terminus: Large ribosomal subunit protein bL12 (125 aa).

The protein belongs to the bacterial ribosomal protein bL12 family. As to quaternary structure, homodimer. Part of the ribosomal stalk of the 50S ribosomal subunit. Forms a multimeric L10(L12)X complex, where L10 forms an elongated spine to which 2 to 4 L12 dimers bind in a sequential fashion. Binds GTP-bound translation factors.

Its function is as follows. Forms part of the ribosomal stalk which helps the ribosome interact with GTP-bound translation factors. Is thus essential for accurate translation. This chain is Large ribosomal subunit protein bL12, found in Chlorobium phaeobacteroides (strain DSM 266 / SMG 266 / 2430).